We begin with the raw amino-acid sequence, 143 residues long: Transcriptional regulator MraZ (143 aa).

2 SpoVT-AbrB domains span residues 5–47 (EYQH…PLNE) and 76–119 (ATEC…SDER).

The protein belongs to the MraZ family. In terms of assembly, forms oligomers.

It localises to the cytoplasm. The protein resides in the nucleoid. In Enterococcus faecalis (strain ATCC 700802 / V583), this protein is Transcriptional regulator MraZ.